Reading from the N-terminus, the 296-residue chain is MKKENWQKIENVYLLGKKIDKAKRMANKGESNTNMLSTEENIVKAKAVSRKKPVDVSYAGLARHESHVDTDYHGQALNTDNQDPKNYQARSFVKENELYESSQDCGHSRLAQILSEENQIKRLPQSDNTTTERIIENNPNYSNKPSKLKRALSGENSVFSIHQRNTLSPSSNLPRIPSDLYDIKQFLENLDARSFKSDMDLKRSQNMRRRATGYPAIVVPFLNGSLPQADLPPLRTIEDIDNLTREQCLTFIQGYGIPIDSSDTVYLKEKLRDAIGMRAFTDMSFEMNSFHLESPR.

The protein belongs to the UPF0612 family.

It is found in the cytoplasm. The protein resides in the nucleus. In terms of biological role, has a role in meiosis. This chain is Meiotically up-regulated gene 2 protein (mug2), found in Schizosaccharomyces pombe (strain 972 / ATCC 24843) (Fission yeast).